A 174-amino-acid chain; its full sequence is ATP-dependent protease subunit HslV (174 aa).

Thr-2 is an active-site residue. Residues Gly-157, Cys-160, and Thr-163 each coordinate Na(+).

The protein belongs to the peptidase T1B family. HslV subfamily. A double ring-shaped homohexamer of HslV is capped on each side by a ring-shaped HslU homohexamer. The assembly of the HslU/HslV complex is dependent on binding of ATP.

Its subcellular location is the cytoplasm. It carries out the reaction ATP-dependent cleavage of peptide bonds with broad specificity.. With respect to regulation, allosterically activated by HslU binding. Its function is as follows. Protease subunit of a proteasome-like degradation complex believed to be a general protein degrading machinery. The polypeptide is ATP-dependent protease subunit HslV (Shewanella putrefaciens (strain CN-32 / ATCC BAA-453)).